The chain runs to 426 residues: Endothelin-1 receptor (426 aa).

An N-terminal signal peptide occupies residues 1-20; it reads MGVLCFLASFWLALVGGAIA. Residues 21–80 lie on the Extracellular side of the membrane; it reads DNAERYSANLSSHVEDFTPFPGTEFNFLGTTLQPPNLALPSNGSMHGYCPQQTKITTAFK. N-linked (GlcNAc...) asparagine glycans are attached at residues asparagine 29 and asparagine 62. Residues 81 to 102 form a helical membrane-spanning segment; sequence YINTVISCTIFIVGMVGNATLL. Over 103-112 the chain is Cytoplasmic; it reads RIIYQNKCMR. Residues 113 to 132 form a helical membrane-spanning segment; the sequence is NGPNALIASLALGDLIYVVI. The Extracellular portion of the chain corresponds to 133–159; that stretch reads DLPINVFKLLAGRWPFDHNDFGVFLCK. Cysteine 158 and cysteine 239 are disulfide-bonded. Residues 160-181 traverse the membrane as a helical segment; that stretch reads LFPFLQKSSVGITVLNLCALSV. Residues 182–205 lie on the Cytoplasmic side of the membrane; it reads DRYRAVASWSRVQGIGIPLITAIE. A helical transmembrane segment spans residues 206–229; that stretch reads IVSIWILSFILAIPEAIGFVMVPF. The Extracellular portion of the chain corresponds to 230–256; it reads EYKGEQHRTCMLNATTKFMEFYQDVKD. A helical transmembrane segment spans residues 257-278; the sequence is WWLFGFYFCMPLVCTAIFYTLM. At 279-306 the chain is on the cytoplasmic side; sequence TCEMLNRRNGSLRIALSEHLKQRREVAK. A helical membrane pass occupies residues 307–328; the sequence is TVFCLVVIFALCWFPLHLSRIL. Residues 329-347 lie on the Extracellular side of the membrane; the sequence is KKTVYDEMDKNRCELLSFL. Residues 348–372 traverse the membrane as a helical segment; it reads LLMDYIGINLATMNSCINPIALYFV. Residues 373–426 lie on the Cytoplasmic side of the membrane; sequence SKKFKNCFQSCLCCCCHQSKSLMTSVPMNGTSIQWKNQEQNHNTERSSHKDSMN. At serine 424 the chain carries Phosphoserine.

Belongs to the G-protein coupled receptor 1 family. Endothelin receptor subfamily. EDNRA sub-subfamily. As to quaternary structure, interacts with HDAC7 and KAT5. In terms of tissue distribution, predominantly expressed in vascular smooth muscle cells of a variety of issues, bronchial smooth muscle cells, myocardium, and the pituitary gland.

It is found in the cell membrane. Functionally, receptor for endothelin-1. Mediates its action by association with G proteins that activate a phosphatidylinositol-calcium second messenger system. The rank order of binding affinities for ET-A is: ET1 &gt; ET2 &gt;&gt; ET3. This Rattus norvegicus (Rat) protein is Endothelin-1 receptor.